Here is a 131-residue protein sequence, read N- to C-terminus: Phosphoribosyl-AMP cyclohydrolase (131 aa).

Residue Asp-82 coordinates Mg(2+). Cys-83 is a binding site for Zn(2+). The Mg(2+) site is built by Asp-84 and Asp-86. 2 residues coordinate Zn(2+): Cys-99 and Cys-106.

Belongs to the PRA-CH family. In terms of assembly, homodimer. The cofactor is Mg(2+). It depends on Zn(2+) as a cofactor.

Its subcellular location is the cytoplasm. The catalysed reaction is 1-(5-phospho-beta-D-ribosyl)-5'-AMP + H2O = 1-(5-phospho-beta-D-ribosyl)-5-[(5-phospho-beta-D-ribosylamino)methylideneamino]imidazole-4-carboxamide. Its pathway is amino-acid biosynthesis; L-histidine biosynthesis; L-histidine from 5-phospho-alpha-D-ribose 1-diphosphate: step 3/9. Its function is as follows. Catalyzes the hydrolysis of the adenine ring of phosphoribosyl-AMP. The sequence is that of Phosphoribosyl-AMP cyclohydrolase from Methanospirillum hungatei JF-1 (strain ATCC 27890 / DSM 864 / NBRC 100397 / JF-1).